The primary structure comprises 376 residues: CCA-adding enzyme (376 aa).

ATP contacts are provided by glycine 23 and arginine 26. The CTP site is built by glycine 23 and arginine 26. Mg(2+)-binding residues include glutamate 36 and aspartate 38. ATP contacts are provided by arginine 106, arginine 152, and arginine 155. Positions 106, 152, and 155 each coordinate CTP.

This sequence belongs to the tRNA nucleotidyltransferase/poly(A) polymerase family. Bacterial CCA-adding enzyme type 2 subfamily. Mg(2+) is required as a cofactor.

The catalysed reaction is a tRNA precursor + 2 CTP + ATP = a tRNA with a 3' CCA end + 3 diphosphate. It carries out the reaction a tRNA with a 3' CCA end + 2 CTP + ATP = a tRNA with a 3' CCACCA end + 3 diphosphate. In terms of biological role, catalyzes the addition and repair of the essential 3'-terminal CCA sequence in tRNAs without using a nucleic acid template. Adds these three nucleotides in the order of C, C, and A to the tRNA nucleotide-73, using CTP and ATP as substrates and producing inorganic pyrophosphate. tRNA 3'-terminal CCA addition is required both for tRNA processing and repair. Also involved in tRNA surveillance by mediating tandem CCA addition to generate a CCACCA at the 3' terminus of unstable tRNAs. While stable tRNAs receive only 3'-terminal CCA, unstable tRNAs are marked with CCACCA and rapidly degraded. The polypeptide is CCA-adding enzyme (Coxiella burnetii (strain RSA 331 / Henzerling II)).